A 755-amino-acid chain; its full sequence is uncharacterized protein (755 aa).

The next 9 membrane-spanning stretches (helical) occupy residues 46–66 (LGLG…GGLY), 70–90 (LKTI…GTIV), 93–113 (GWGL…YLAV), 118–138 (GAMV…NVST), 143–163 (FTSL…IWPF), 411–431 (IAHL…IFVL), 446–466 (LLGT…IQDP), 482–502 (ALLR…ALIL), and 514–534 (ALLS…GLAF).

The protein belongs to the YccS/YhfK family.

The protein localises to the cell membrane. This is an uncharacterized protein from Synechocystis sp. (strain ATCC 27184 / PCC 6803 / Kazusa).